A 983-amino-acid chain; its full sequence is UPF0182 protein CMM_1204 (983 aa).

Helical transmembrane passes span Leu-16–Phe-36, Trp-56–Val-76, Leu-108–Gly-128, Phe-161–Leu-181, Ile-205–Asp-225, Ala-255–Gly-275, and Ile-281–Ile-301. The span at Gln-699–Ala-714 shows a compositional bias: polar residues. Disordered stretches follow at residues Gln-699 to Ala-718 and Asp-884 to Val-936. The segment covering Gly-902–Gly-918 has biased composition (gly residues). A compositionally biased stretch (low complexity) spans Ser-919–Ala-933.

The protein belongs to the UPF0182 family.

The protein localises to the cell membrane. This is UPF0182 protein CMM_1204 from Clavibacter michiganensis subsp. michiganensis (strain NCPPB 382).